We begin with the raw amino-acid sequence, 398 residues long: Histone-lysine N-methyltransferase ASHR2 (398 aa).

The 260-residue stretch at 11–270 (TLLRVAEIGG…EGREVCLSYF (260 aa)) folds into the SET domain.

Belongs to the class V-like SAM-binding methyltransferase superfamily. Histone-lysine methyltransferase family. SET2 subfamily.

Its subcellular location is the nucleus. It is found in the chromosome. The enzyme catalyses L-lysyl-[histone] + S-adenosyl-L-methionine = N(6)-methyl-L-lysyl-[histone] + S-adenosyl-L-homocysteine + H(+). Histone methyltransferase. This Arabidopsis thaliana (Mouse-ear cress) protein is Histone-lysine N-methyltransferase ASHR2 (ASHR2).